A 258-amino-acid chain; its full sequence is Diacetyl reductase [(S)-acetoin forming] (258 aa).

Residue 8–32 (LVTGGAQGIGFKIAERLVEDGFKVA) coordinates NAD(+). Ser141 lines the substrate pocket. The Proton acceptor role is filled by Tyr154. Lys158 is an active-site residue.

Belongs to the short-chain dehydrogenases/reductases (SDR) family.

The catalysed reaction is (S)-acetoin + NAD(+) = diacetyl + NADH + H(+). In terms of biological role, catalyzes the irreversible reduction of 2,3-butanediol to (S)-acetoin in the presence of NADH. The sequence is that of Diacetyl reductase [(S)-acetoin forming] (butA) from Staphylococcus aureus (strain Mu50 / ATCC 700699).